The primary structure comprises 312 residues: tRNA pseudouridine synthase B (312 aa).

The active-site Nucleophile is the Asp-49.

The protein belongs to the pseudouridine synthase TruB family. Type 1 subfamily.

It carries out the reaction uridine(55) in tRNA = pseudouridine(55) in tRNA. Its function is as follows. Responsible for synthesis of pseudouridine from uracil-55 in the psi GC loop of transfer RNAs. This is tRNA pseudouridine synthase B from Chelativorans sp. (strain BNC1).